Here is a 933-residue protein sequence, read N- to C-terminus: C-1-tetrahydrofolate synthase, cytoplasmic (933 aa).

A methylenetetrahydrofolate dehydrogenase and cyclohydrolase region spans residues 1-303 (MWEPQGSLDP…DRLLAPTWPL (303 aa)). Residues 51–55 (YIRMK) and 98–100 (VQM) each bind substrate. NADP(+) contacts are provided by residues 170-172 (GRS) and Ser195. Substrate is bound at residue 270 to 274 (PGGVG). Positions 304–933 (RPLRITPLSP…TKTGEIEGLF (630 aa)) are formyltetrahydrofolate synthetase. 378 to 385 (TPLGEGKS) serves as a coordination point for ATP.

The protein in the N-terminal section; belongs to the tetrahydrofolate dehydrogenase/cyclohydrolase family. It in the C-terminal section; belongs to the formate--tetrahydrofolate ligase family. In terms of assembly, homodimer.

It is found in the cytoplasm. The catalysed reaction is (6R)-5,10-methylene-5,6,7,8-tetrahydrofolate + NADP(+) = (6R)-5,10-methenyltetrahydrofolate + NADPH. It carries out the reaction (6R)-5,10-methenyltetrahydrofolate + H2O = (6R)-10-formyltetrahydrofolate + H(+). The enzyme catalyses (6S)-5,6,7,8-tetrahydrofolate + formate + ATP = (6R)-10-formyltetrahydrofolate + ADP + phosphate. Its pathway is one-carbon metabolism; tetrahydrofolate interconversion. The polypeptide is C-1-tetrahydrofolate synthase, cytoplasmic (Spodoptera frugiperda (Fall armyworm)).